Reading from the N-terminus, the 182-residue chain is Large ribosomal subunit protein uL5 (182 aa).

The protein belongs to the universal ribosomal protein uL5 family. As to quaternary structure, part of the 50S ribosomal subunit; part of the 5S rRNA/L5/L18/L25 subcomplex. Contacts the 5S rRNA and the P site tRNA. Forms a bridge to the 30S subunit in the 70S ribosome.

Functionally, this is one of the proteins that bind and probably mediate the attachment of the 5S RNA into the large ribosomal subunit, where it forms part of the central protuberance. In the 70S ribosome it contacts protein S13 of the 30S subunit (bridge B1b), connecting the 2 subunits; this bridge is implicated in subunit movement. Contacts the P site tRNA; the 5S rRNA and some of its associated proteins might help stabilize positioning of ribosome-bound tRNAs. The polypeptide is Large ribosomal subunit protein uL5 (Thermus thermophilus (strain ATCC BAA-163 / DSM 7039 / HB27)).